A 926-amino-acid chain; its full sequence is MTSRFRLPAGRTYNVRASELARDRQHTEVVCNILLLDNTVQAFKVNKHDQGQVLLDVVFKHLDLTEQDYFGLQLADDSTDNPRWLDPNKPIRKQLKRGSPYSLNFRVKFFVSDPNKLQEEYTRYQYFLQIKQDILTGRLPCPSNTAALLASFAVQSELGDYDQSENLSGYLSDYSFIPNQPQDFEKEIAKLHQQHIGLSPAEAEFNYLNTARTLELYGVEFHYARDQSNNEIMIGVMSGGILIYKNRVRMNTFPWLKIVKISFKCKQFFIQLRKELHESRETLLGFNMVNYRACKNLWKACVEHHTFFRLDRPLPPQKNFFAHYFTLGSKFRYCGRTEVQSVQYGKEKANKDRVFARSPSKPLARKLMDWEVVSRNSISDDRLETQSLPSRSPPGTPNHRNSTFTQEGTRLRPSSVGHLVDHMVHTSPSEVFVNQRSPSSTQANSIVLESSPSQETPGDGKPPALPPKQSKKNSWNQIHYSHSQQDLESHINETFDIPSSPEKPTPNGGIPHDNLVLIRMKPDENGRFGFNVKGGYDQKMPVIVSRVAPGTPADLCVPRLNEGDQVVLINGRDIAEHTHDQVVLFIKASCERHSGELMLLVRPNAVYDVVEEKLENEPDFQYIPEKAPLDSVHQDDHSLRESMIQLAEGLITGTVLTQFDQLYRKKPGMTMSCAKLPQNISKNRYRDISPYDATRVILKGNEDYINANYINMEIPSSSIINQYIACQGPLPHTCTDFWQMTWEQGSSMVVMLTTQVERGRVKCHQYWPEPTGSSSYGCYQVTCHSEEGNTAYIFRKMTLFNQEKNESRPLTQIQYIAWPDHGVPDDSSDFLDFVCHVRNKRAGKEEPVVVHCSAGIGRTGVLITMETAMCLIECNQPVYPLDIVRTMRDQRAMMIQTPSQYRFVCEAILKVYEEGFVKPLTTSTNK.

The 284-residue stretch at Val29–Arg312 folds into the FERM domain. 2 disordered regions span residues Asp380–Arg412 and Glu430–Trp475. 2 stretches are compositionally biased toward polar residues: residues Asn398–Gly408 and Glu430–Thr456. The residue at position 474 (Ser474) is a Phosphoserine. The region spanning Leu517–Ser589 is the PDZ domain. The 257-residue stretch at Val655–Val911 folds into the Tyrosine-protein phosphatase domain. Residues Asp820, Cys852–Arg858, and Gln896 each bind substrate. Cys852 (phosphocysteine intermediate) is an active-site residue.

The protein belongs to the protein-tyrosine phosphatase family. Non-receptor class subfamily. In terms of assembly, interacts with MAPK12 (via C-terminus); this interaction abolishes PTPN4 catalytic autoinhibition and thus activates the phosphatase activity. As to quaternary structure, (Microbial infection) Interacts with attenuated rabies virus protein G; this interaction is required for virally-induced apoptosis. Post-translationally, highly phosphorylated on serine and threonine residues but not on tyrosines. Cleaved and activated by calpain I/CAPN1.

It localises to the cell membrane. It is found in the cytoplasm. Its subcellular location is the cytoskeleton. The enzyme catalyses O-phospho-L-tyrosyl-[protein] + H2O = L-tyrosyl-[protein] + phosphate. In terms of biological role, phosphatase that plays a role in immunity, learning, synaptic plasticity or cell homeostasis. Regulates neuronal cell homeostasis by protecting neurons against apoptosis. Negatively regulates TLR4-induced interferon beta production by dephosphorylating adapter TICAM2 and inhibiting subsequent TRAM-TRIF interaction. Also dephosphorylates the immunoreceptor tyrosine-based activation motifs/ITAMs of the TCR zeta subunit and thereby negatively regulates TCR-mediated signaling pathway. May act at junctions between the membrane and the cytoskeleton. This is Tyrosine-protein phosphatase non-receptor type 4 (PTPN4) from Homo sapiens (Human).